A 395-amino-acid polypeptide reads, in one-letter code: Cysteine synthase 2 (395 aa).

Residues 6-22 (QDLASGIAMGAVFMYLL) form a helical membrane-spanning segment. K83 carries the N6-(pyridoxal phosphate)lysine modification. Residues 228 to 232 (GTGGT) and S335 contribute to the pyridoxal 5'-phosphate site.

Belongs to the cysteine synthase/cystathionine beta-synthase family. Pyridoxal 5'-phosphate serves as cofactor.

Its subcellular location is the mitochondrion. It localises to the mitochondrion outer membrane. It carries out the reaction O-acetyl-L-serine + hydrogen sulfide = L-cysteine + acetate. Its function is as follows. Putative cysteine synthase that catalyzes the conversion of O-acetyl-L-serine (OAS) into cysteine, the last step in the cysteine biosynthesis pathway. However, in contrast to cysteine synthase cys11, this CS-like protein seems not to function in cysteine biosynthesis, at least under normal growth conditions, although the transcript is produced. This chain is Cysteine synthase 2 (cys12), found in Schizosaccharomyces pombe (strain 972 / ATCC 24843) (Fission yeast).